We begin with the raw amino-acid sequence, 629 residues long: Extracellular metalloproteinase 10 (629 aa).

A signal peptide spans 1–19; sequence MHGLLLAAGLLSLPLYTIA. A propeptide spanning residues 20 to 240 is cleaved from the precursor; the sequence is HTQPSGALSR…VHNVVDYVAH (221 aa). N-linked (GlcNAc...) asparagine glycosylation is found at asparagine 281 and asparagine 331. Position 424 (histidine 424) interacts with Zn(2+). Residue glutamate 425 is part of the active site. Histidine 428 serves as a coordination point for Zn(2+). N-linked (GlcNAc...) asparagine glycans are attached at residues asparagine 469 and asparagine 617.

The protein belongs to the peptidase M36 family. Zn(2+) is required as a cofactor.

The protein resides in the secreted. Secreted metalloproteinase that allows assimilation of proteinaceous substrates and probably acts as a virulence factor. The protein is Extracellular metalloproteinase 10 (MEP10) of Coccidioides posadasii (strain C735) (Valley fever fungus).